A 626-amino-acid polypeptide reads, in one-letter code: L-amino-acid oxidase 4 (626 aa).

Residues 1–18 (KSFFRSLVAASLVIVSYS) form the signal peptide. Residue Asn-54 is glycosylated (N-linked (GlcNAc...) asparagine). FAD-binding residues include Gly-75, Glu-94, Ala-95, Arg-102, Met-122, and Arg-123. An L-glutamate-binding site is contributed by Arg-123. Residue Arg-123 participates in L-glutamine binding. Arg-123 serves as a coordination point for L-lysine. Residue Arg-123 participates in L-phenylalanine binding. N-linked (GlcNAc...) asparagine glycosylation is found at Asn-164, Asn-193, and Asn-331. Val-334 is a binding site for FAD. Tyr-457 contacts L-glutamate. Tyr-457 contributes to the L-glutamine binding site. Tyr-457 is an L-lysine binding site. Tyr-457 lines the L-phenylalanine pocket. FAD is bound at residue Glu-551. Residue Ala-558 coordinates L-phenylalanine. The FAD site is built by Trp-559 and Val-560.

The protein belongs to the flavin monoamine oxidase family. FIG1 subfamily. In terms of assembly, homodimer. The cofactor is FAD. Out of the 4 glycosylated residues, Asn-54 is hypermannosylated. The presence of a hypermannosylated N-glycan on Asn-54 leads to adoption of a more active conformation in the absence of acid activation.

Its subcellular location is the secreted. The enzyme catalyses an L-alpha-amino acid + O2 + H2O = a 2-oxocarboxylate + H2O2 + NH4(+). It catalyses the reaction L-lysine + O2 + H2O = 6-amino-2-oxohexanoate + H2O2 + NH4(+). It carries out the reaction L-glutamate + O2 + H2O = H2O2 + 2-oxoglutarate + NH4(+). The catalysed reaction is L-arginine + O2 + H2O = 5-guanidino-2-oxopentanoate + H2O2 + NH4(+). The enzyme catalyses L-leucine + O2 + H2O = 4-methyl-2-oxopentanoate + H2O2 + NH4(+). It catalyses the reaction L-asparagine + O2 + H2O = 2-oxosuccinamate + H2O2 + NH4(+). It carries out the reaction L-histidine + O2 + H2O = 3-(imidazol-5-yl)pyruvate + H2O2 + NH4(+). The catalysed reaction is L-isoleucine + O2 + H2O = (S)-3-methyl-2-oxopentanoate + H2O2 + NH4(+). The enzyme catalyses L-methionine + O2 + H2O = 4-methylsulfanyl-2-oxobutanoate + H2O2 + NH4(+). It catalyses the reaction L-phenylalanine + O2 + H2O = 3-phenylpyruvate + H2O2 + NH4(+). It carries out the reaction L-tyrosine + O2 + H2O = 3-(4-hydroxyphenyl)pyruvate + H2O2 + NH4(+). The catalysed reaction is L-glutamine + O2 + H2O = 2-oxoglutaramate + H2O2 + NH4(+). The enzyme catalyses L-alanine + O2 + H2O = pyruvate + H2O2 + NH4(+). LAAO4 is activated by exposure to acidic pH, the detergent sodium dodecyl sulfate, or freezing. In terms of biological role, catalyzes the oxidative deamination of L-amino acids with molecular oxygen to the corresponding alpha-keto acids and ammonia. L-glutamine shows the highest relative activity but LAAO4 has a broad substrate specificity, including L-amino acids with big aromatic, acidic and basic side chains. Methyl esters of these L-amino acids are also accepted, ethyl esters are converted but with lower activity, whereas D-Amino acids are not converted. No reaction is detected for small polar amino acids such as L-cysteine or L-aspartate, and very little for small, branched hydrophobic amino acids like L-valine. This chain is L-amino-acid oxidase 4, found in Hebeloma cylindrosporum.